A 156-amino-acid polypeptide reads, in one-letter code: MPRRRVIGQRKILPDPKFGSELLAKFVNILMVDGKKSTAETIVYSALETLAQRSGKSELEAFEVALENVRPTVEVKSRRVGGSTYQVPVEVRPVRRNALAMRWIVEAARKRGDKSMALRLANELTDAADNKGTAVKKREDVHRMAEANKAFAHYRW.

The protein belongs to the universal ribosomal protein uS7 family. As to quaternary structure, part of the 30S ribosomal subunit. Contacts proteins S9 and S11.

Its function is as follows. One of the primary rRNA binding proteins, it binds directly to 16S rRNA where it nucleates assembly of the head domain of the 30S subunit. Is located at the subunit interface close to the decoding center, probably blocks exit of the E-site tRNA. The polypeptide is Small ribosomal subunit protein uS7 (Citrobacter koseri (strain ATCC BAA-895 / CDC 4225-83 / SGSC4696)).